Reading from the N-terminus, the 593-residue chain is Elongation factor 4 (593 aa).

The tr-type G domain occupies 2 to 181 (DKIRNFCIIA…AVIERIPHPQ (180 aa)). GTP-binding positions include 14-19 (DHGKST) and 128-131 (NKCD).

This sequence belongs to the TRAFAC class translation factor GTPase superfamily. Classic translation factor GTPase family. LepA subfamily.

The protein localises to the cell inner membrane. The catalysed reaction is GTP + H2O = GDP + phosphate + H(+). Its function is as follows. Required for accurate and efficient protein synthesis under certain stress conditions. May act as a fidelity factor of the translation reaction, by catalyzing a one-codon backward translocation of tRNAs on improperly translocated ribosomes. Back-translocation proceeds from a post-translocation (POST) complex to a pre-translocation (PRE) complex, thus giving elongation factor G a second chance to translocate the tRNAs correctly. Binds to ribosomes in a GTP-dependent manner. The polypeptide is Elongation factor 4 (Bacteroides fragilis (strain ATCC 25285 / DSM 2151 / CCUG 4856 / JCM 11019 / LMG 10263 / NCTC 9343 / Onslow / VPI 2553 / EN-2)).